A 1250-amino-acid chain; its full sequence is SRC kinase signaling inhibitor 1 (1250 aa).

The segment covering 19 to 45 has biased composition (basic and acidic residues); the sequence is AEGRARSPREEVGPRDPGGRGEPDPER. Residues 19-78 are disordered; sequence AEGRARSPREEVGPRDPGGRGEPDPERSSPPMLSADDAEYPREYRTLGGGGGGGSGGRRF. Phosphoserine occurs at positions 47 and 52. Positions 65–75 are enriched in gly residues; sequence LGGGGGGGSGG. S79 carries the post-translational modification Phosphoserine. At T86 the chain carries Phosphothreonine. Phosphoserine is present on residues S87, S98, S211, S233, S237, S247, and S293. At Y309 the chain carries Phosphotyrosine. Residues 352–448 are disordered; that stretch reads ASRESSPTRR…RRDVKPDEDL (97 aa). Residues 354-364 are compositionally biased toward polar residues; the sequence is RESSPTRRLNN. Positions 365-374 are enriched in low complexity; it reads LSPASHLASS. Phosphoserine occurs at positions 366, 375, and 392. Residues 381-399 show a composition bias toward low complexity; sequence PSGLPSGLPSGSPSRSRLS. R397 and R404 each carry omega-N-methylarginine. 3 positions are modified to phosphoserine: S411, S430, and S432. Over residues 437–448 the composition is skewed to basic and acidic residues; sequence LERRDVKPDEDL. Phosphotyrosine is present on Y464. Residues 538–710 form a disordered region; sequence PSSPQKLADV…ASSTPAGQPT (173 aa). Over residues 552–563 the composition is skewed to pro residues; the sequence is GGPPPPHSPYSG. Residues S559, S562, and S566 each carry the phosphoserine modification. R567 is modified (omega-N-methylarginine). S569, S579, S581, S583, and S588 each carry phosphoserine. Low complexity predominate over residues 590 to 607; the sequence is GGKARSTGSASTAGAPPS. Positions 628–640 are enriched in basic and acidic residues; that stretch reads KDTETRERMEAME. Phosphoserine is present on residues S664 and S688. A phosphothreonine mark is found at T691 and T704. The segment covering 701–710 has biased composition (low complexity); sequence ASSTPAGQPT. Coiled coils occupy residues 712 to 753 and 793 to 813; these read VSRL…RALL and EELI…IQRD. The interval 714 to 764 is interaction with SNAP25; it reads RLQMQLHLRGLQNSASDLRGQLQQLRNVQLQNQESVRALLKPTEADVSMRV. Phosphoserine is present on residues S911 and S933. 2 disordered regions span residues 924-982 and 1016-1094; these read GLDF…ERDW and DCAS…TGEV. Phosphothreonine is present on T951. S1054 bears the Phosphoserine mark. Residues 1069 to 1078 are compositionally biased toward pro residues; that stretch reads KSPPPPPPRR. Phosphoserine is present on residues S1110 and S1127. The disordered stretch occupies residues 1155-1250; it reads ELESGGSSVP…FGARNSSISF (96 aa). A compositionally biased stretch (polar residues) spans 1217 to 1250; it reads PNETSSPGSEKPSGSRTSIPVLTSFGARNSSISF.

It belongs to the SRCIN1 family. In terms of assembly, interacts with the N-terminal coiled-coil region of SNAP25. Interacts with BCAR1/p130Cas and SRC through its C-terminal domain. Interacts with CSK, CTTN, SORBS3/vinexin, SYP and MAPRE3/EB3. Post-translationally, tyrosine-phosphorylated in response to EGF and to cell adhesion to integrin ligands. In terms of tissue distribution, expressed predominantly in central nervous system with high levels detected in cortex, cerebellum, midbrain and spinal cord (at protein level). Also expressed in testis and epithelial-rich tissues such as mammary gland, lung and kidney.

The protein localises to the cytoplasm. It localises to the cytoskeleton. The protein resides in the cell projection. Its subcellular location is the axon. It is found in the dendrite. The protein localises to the presynapse. It localises to the postsynapse. The protein resides in the postsynaptic density. Functionally, acts as a negative regulator of SRC by activating CSK which inhibits SRC activity and downstream signaling, leading to impaired cell spreading and migration. Regulates dendritic spine morphology. Involved in calcium-dependent exocytosis. May play a role in neurotransmitter release or synapse maintenance. This is SRC kinase signaling inhibitor 1 (Srcin1) from Mus musculus (Mouse).